The primary structure comprises 917 residues: Alanine--tRNA ligase (917 aa).

H592, H596, C694, and H698 together coordinate Zn(2+).

The protein belongs to the class-II aminoacyl-tRNA synthetase family. Zn(2+) is required as a cofactor.

The protein localises to the cytoplasm. The catalysed reaction is tRNA(Ala) + L-alanine + ATP = L-alanyl-tRNA(Ala) + AMP + diphosphate. In terms of biological role, catalyzes the attachment of alanine to tRNA(Ala) in a two-step reaction: alanine is first activated by ATP to form Ala-AMP and then transferred to the acceptor end of tRNA(Ala). Also edits incorrectly charged Ser-tRNA(Ala) and Gly-tRNA(Ala) via its editing domain. In Sorangium cellulosum (strain So ce56) (Polyangium cellulosum (strain So ce56)), this protein is Alanine--tRNA ligase.